We begin with the raw amino-acid sequence, 324 residues long: UDP-N-acetylenolpyruvoylglucosamine reductase (324 aa).

One can recognise an FAD-binding PCMH-type domain in the interval 36–203; the sequence is FRAGGLAELM…THAIFEGYAE (168 aa). Arginine 183 is a catalytic residue. Serine 232 serves as the catalytic Proton donor. Glutamate 302 is an active-site residue.

This sequence belongs to the MurB family. It depends on FAD as a cofactor.

The protein resides in the cytoplasm. It carries out the reaction UDP-N-acetyl-alpha-D-muramate + NADP(+) = UDP-N-acetyl-3-O-(1-carboxyvinyl)-alpha-D-glucosamine + NADPH + H(+). It participates in cell wall biogenesis; peptidoglycan biosynthesis. Functionally, cell wall formation. This chain is UDP-N-acetylenolpyruvoylglucosamine reductase, found in Rhizobium meliloti (strain 1021) (Ensifer meliloti).